Here is a 391-residue protein sequence, read N- to C-terminus: Na(+)/H(+) antiporter NhaA (391 aa).

The next 11 helical transmembrane spans lie at 14-34 (AGGI…NSPL), 59-79 (LIHW…GLEV), 95-115 (SLPT…YLIF), 124-144 (VGWA…MALL), 154-174 (VFLL…IAMF), 177-197 (TDLS…LVGL), 213-233 (LILW…GVII), 261-281 (FVIL…GMSL), 292-312 (IALG…FVAV), 331-351 (VAVM…LAFI), and 363-383 (LGIL…LSKV).

This sequence belongs to the NhaA Na(+)/H(+) (TC 2.A.33) antiporter family.

Its subcellular location is the cell inner membrane. The catalysed reaction is Na(+)(in) + 2 H(+)(out) = Na(+)(out) + 2 H(+)(in). Its function is as follows. Na(+)/H(+) antiporter that extrudes sodium in exchange for external protons. The sequence is that of Na(+)/H(+) antiporter NhaA from Shewanella loihica (strain ATCC BAA-1088 / PV-4).